A 185-amino-acid polypeptide reads, in one-letter code: Ribosome-recycling factor (185 aa).

The disordered stretch occupies residues 137–159; sequence EDLKADEKAKDISEDDRKRMEDE.

This sequence belongs to the RRF family.

The protein resides in the cytoplasm. Functionally, responsible for the release of ribosomes from messenger RNA at the termination of protein biosynthesis. May increase the efficiency of translation by recycling ribosomes from one round of translation to another. In Erythrobacter litoralis (strain HTCC2594), this protein is Ribosome-recycling factor.